The primary structure comprises 227 residues: ATP-dependent dethiobiotin synthetase BioD (227 aa).

Position 13 to 18 (13 to 18 (DVGKTV)) interacts with ATP. Threonine 17 contributes to the Mg(2+) binding site. Lysine 38 is a catalytic residue. ATP contacts are provided by residues aspartate 55, 116-119 (EGAG), 176-177 (NR), and 205-207 (PYI). Aspartate 55 and glutamate 116 together coordinate Mg(2+).

Belongs to the dethiobiotin synthetase family. Homodimer. Mg(2+) serves as cofactor.

It is found in the cytoplasm. The catalysed reaction is (7R,8S)-7,8-diammoniononanoate + CO2 + ATP = (4R,5S)-dethiobiotin + ADP + phosphate + 3 H(+). It participates in cofactor biosynthesis; biotin biosynthesis; biotin from 7,8-diaminononanoate: step 1/2. Its function is as follows. Catalyzes a mechanistically unusual reaction, the ATP-dependent insertion of CO2 between the N7 and N8 nitrogen atoms of 7,8-diaminopelargonic acid (DAPA, also called 7,8-diammoniononanoate) to form a ureido ring. In Vibrio campbellii (strain ATCC BAA-1116), this protein is ATP-dependent dethiobiotin synthetase BioD.